Here is a 257-residue protein sequence, read N- to C-terminus: Ribosome-associated protein quality control protein P2 (257 aa).

The segment at 1 to 74 (MSDIYQHFRK…RAERKRAILF (74 aa)) is N-terminal domain. The tract at residues 87-166 (LQAFNVRYAD…EKIDLSDLNI (80 aa)) is central region. One can recognise an S4 RNA-binding domain in the interval 181–251 (LRLDAVCASM…GKTKKDKWRV (71 aa)).

As to quaternary structure, in the presence of chloramphenicol (a translation elongation inhibitor), but not erythromycin or lincomycin, associates with 50S ribosomal subunits with or without a tRNA in the P-site. The S4 domain binds in a similar position to RqcP.

It localises to the cytoplasm. Part of the ribosome quality control system (RQC), a ribosome-associated complex that mediates the extraction of incompletely synthesized nascent chains from stalled ribosomes and their subsequent degradation. RqcH recruits Ala-charged tRNA, and with RqcP directs the elongation of stalled nascent chains on 50S ribosomal subunits, leading to non-templated C-terminal alanine extensions (Ala tail). The Ala tail promotes nascent chain degradation. RqcP2 (YlmH) overexpression can compensate for RqcP's role in Ala tailing during RQC, restoring Ala tail addition to peptides in stalled ribosomes. Overexpression complements a double ssrA-rqcP double deletion, but not an ssrA-rqcH double deletion. Its function is as follows. The majority of tagged protein is associated with tRNA-less 50S subunits, suggesting it might also play a role in late stage 50S subunit biogenesis. The sequence is that of Ribosome-associated protein quality control protein P2 from Bacillus subtilis (strain 168).